The following is a 308-amino-acid chain: KH domain-containing protein At4g26480 (308 aa).

The interval 1 to 26 (MMMMTSLGGGAGGGGGGGGSGGGRFV) is disordered. Positions 7 to 24 (LGGGAGGGGGGGGSGGGR) are enriched in gly residues. Positions 165-232 (DIPVDKYPNY…EHLNEPLHIL (68 aa)) constitute a KH domain. The disordered stretch occupies residues 284–308 (EEGSPMSGSISPYNSLGMKRAKTRG). Ser-294 is modified (phosphoserine).

It is found in the nucleus. This Arabidopsis thaliana (Mouse-ear cress) protein is KH domain-containing protein At4g26480.